Consider the following 142-residue polypeptide: Histone H2B (142 aa).

Over residues 1–10 (MPPKPAEKKP) the composition is skewed to basic and acidic residues. Positions 1–50 (MPPKPAEKKPSSTAGKAPASSAGKAPAEAAKKTSKAPAKSGEKKKATKVR) are disordered. 2 positions are modified to N6-acetyllysine; alternate: Lys-8 and Lys-9. Glycyl lysine isopeptide (Lys-Gly) (interchain with G-Cter in SUMO); alternate cross-links involve residues Lys-8 and Lys-9. Residues 11–28 (SSTAGKAPASSAGKAPAE) show a composition bias toward low complexity. At Lys-24 the chain carries N6-acetyllysine. Residues 40–50 (SGEKKKATKVR) are compositionally biased toward basic and acidic residues. Residue Lys-137 forms a Glycyl lysine isopeptide (Lys-Gly) (interchain with G-Cter in ubiquitin) linkage.

The protein belongs to the histone H2B family. In terms of assembly, the nucleosome is a histone octamer containing two molecules each of H2A, H2B, H3 and H4 assembled in one H3-H4 heterotetramer and two H2A-H2B heterodimers. The octamer wraps approximately 147 bp of DNA. Post-translationally, monoubiquitinated by the UBC2-BRE1 complex to form H2BK123ub1. H2BK123ub1 gives a specific tag for epigenetic transcriptional activation and is also prerequisite for H3K4me and H3K79me formation. H2BK123ub1 also modulates the formation of double-strand breaks during meiosis and is a prerequisite for DNA-damage checkpoint activation. In terms of processing, acetylation of N-terminal lysines and particularly formation of H2BK11ac has a positive effect on transcription. Sumoylation to form H2BK6su or H2BK7su occurs preferentially near the telomeres and represses gene transcription.

It localises to the nucleus. It is found in the chromosome. In terms of biological role, core component of nucleosome. Nucleosomes wrap and compact DNA into chromatin, limiting DNA accessibility to the cellular machineries which require DNA as a template. Histones thereby play a central role in transcription regulation, DNA repair, DNA replication and chromosomal stability. DNA accessibility is regulated via a complex set of post-translational modifications of histones, also called histone code, and nucleosome remodeling. The sequence is that of Histone H2B (HTB1) from Mycosarcoma maydis (Corn smut fungus).